The sequence spans 396 residues: 2,3-diketo-5-methylthiopentyl-1-phosphate enolase (396 aa).

Lysine 85 serves as the catalytic Proton acceptor. Substrate contacts are provided by residues lysine 134, 160 to 163 (KDDE), histidine 251, glycine 323, and 345 to 346 (GG). Lysine 160, aspartate 162, and glutamate 163 together coordinate Mg(2+). Lysine 160 bears the N6-carboxylysine mark.

Belongs to the RuBisCO large chain family. Type IV subfamily. In terms of assembly, homodimer. It depends on Mg(2+) as a cofactor.

It catalyses the reaction 5-methylsulfanyl-2,3-dioxopentyl phosphate = 2-hydroxy-5-methylsulfanyl-3-oxopent-1-enyl phosphate. It functions in the pathway amino-acid biosynthesis; L-methionine biosynthesis via salvage pathway; L-methionine from S-methyl-5-thio-alpha-D-ribose 1-phosphate: step 3/6. Catalyzes the enolization of 2,3-diketo-5-methylthiopentyl-1-phosphate (DK-MTP-1-P) into 2-hydroxy-3-keto-5-methylthiopentenyl-1-phosphate (HK-MTPenyl-1-P). The protein is 2,3-diketo-5-methylthiopentyl-1-phosphate enolase of Exiguobacterium sibiricum (strain DSM 17290 / CCUG 55495 / CIP 109462 / JCM 13490 / 255-15).